A 499-amino-acid polypeptide reads, in one-letter code: Increased recombination centers protein 15 (499 aa).

FAD is bound at residue 47 to 56 (DQRASLGGAY).

This sequence belongs to the class-I pyridine nucleotide-disulfide oxidoreductase family.

Its subcellular location is the cytoplasm. This chain is Increased recombination centers protein 15 (IRC15), found in Saccharomyces cerevisiae (strain ATCC 204508 / S288c) (Baker's yeast).